The primary structure comprises 682 residues: Protein SPT2 homolog (682 aa).

Positions 1-569 (MDFREILLIA…PLLSGYRSAQ (569 aa)) are important for interaction with DNA. A Glycyl lysine isopeptide (Lys-Gly) (interchain with G-Cter in SUMO2) cross-link involves residue Lys37. Residues 46–82 (AFLRRKEEELRQKALEEKKRKEELVKKRIELKHDKKA) are a coiled coil. The segment at 80–170 (KKARAMAKRT…SAPSPMNFTD (91 aa)) is disordered. Positions 101 to 111 (VEEKTKKKQLV) are enriched in basic and acidic residues. A compositionally biased stretch (acidic residues) spans 121–131 (QEYDVEEEDFI). The segment covering 156–165 (KAPLKSAPSP) has biased composition (low complexity). A Glycyl lysine isopeptide (Lys-Gly) (interchain with G-Cter in SUMO2) cross-link involves residue Lys186. Over residues 187 to 208 (VVKKAEDRPLTAEELREREFLE) the composition is skewed to basic and acidic residues. Disordered stretches follow at residues 187–533 (VVKK…TKPR) and 549–595 (RSSN…DEYD). Composition is skewed to polar residues over residues 267–280 (STASEKQAALSSPK), 317–334 (STCSPSVPKTPASGTQKS), 371–393 (PGSNSGSAPGQPNPGTARPTLSS), 400–409 (QNGSSSSGPE), and 419–432 (ASNSHLSGRTLNGT). Position 277 is a phosphoserine (Ser277). 2 stretches are compositionally biased toward low complexity: residues 435-460 (PGRPASSSSGPGRPISGSAGSGRPVG) and 490-504 (SGPGRSISGSIPAGR). The tract at residues 570-682 (GPQRLPFPTG…RRKAKKLKRH (113 aa)) is important for interaction with histones. Residue Lys581 is modified to N6-acetyllysine. Acidic residues predominate over residues 586–595 (YEEDDDDEYD). Ser596 is modified (phosphoserine). 2 stretches are compositionally biased toward basic and acidic residues: residues 641-652 (SWKEQQKEEAKS) and 663-672 (EMRREEEELK). A disordered region spans residues 641–682 (SWKEQQKEEAKSLRLGMQEDLEEMRREEEELKRRKAKKLKRH). Residues 642 to 682 (WKEQQKEEAKSLRLGMQEDLEEMRREEEELKRRKAKKLKRH) adopt a coiled-coil conformation. A compositionally biased stretch (basic residues) spans 673-682 (RRKAKKLKRH).

It belongs to the SPT2 family. Interacts with histones. Interacts with a heterotetrameric complex formed by histone H3 and H4, especially when the histone tetramer is not bound to DNA. Interacts with histone H3.3.

It is found in the nucleus. Its subcellular location is the nucleolus. Functionally, histone chaperone that stabilizes pre-existing histone tetramers and regulates replication-independent histone exchange on chromatin. Required for normal chromatin refolding in the coding region of transcribed genes, and for the suppression of spurious transcription. Binds DNA and histones and promotes nucleosome assembly (in vitro). Facilitates formation of tetrameric histone complexes containing histone H3 and H4. Modulates RNA polymerase 1-mediated transcription. Binds DNA, with a preference for branched DNA species, such as Y-form DNA and Holliday junction DNA. This chain is Protein SPT2 homolog (Spty2d1), found in Mus musculus (Mouse).